The chain runs to 109 residues: Iron-sulfur cluster assembly protein CyaY (109 aa).

The protein belongs to the frataxin family.

Functionally, involved in iron-sulfur (Fe-S) cluster assembly. May act as a regulator of Fe-S biogenesis. The protein is Iron-sulfur cluster assembly protein CyaY of Verminephrobacter eiseniae (strain EF01-2).